The primary structure comprises 149 residues: Large-conductance mechanosensitive channel (149 aa).

2 consecutive transmembrane segments (helical) span residues 14 to 34 and 85 to 105; these read VVDM…VNTL and GLFI…YLLV.

It belongs to the MscL family. As to quaternary structure, homopentamer.

Its subcellular location is the cell inner membrane. Channel that opens in response to stretch forces in the membrane lipid bilayer. May participate in the regulation of osmotic pressure changes within the cell. The chain is Large-conductance mechanosensitive channel from Chlorobium phaeovibrioides (strain DSM 265 / 1930) (Prosthecochloris vibrioformis (strain DSM 265)).